Consider the following 427-residue polypeptide: Serine--tRNA ligase (427 aa).

235 to 237 is a binding site for L-serine; that stretch reads TAE. ATP is bound by residues 266 to 268 and V282; that span reads RRE. An L-serine-binding site is contributed by E289. Residue 353-356 participates in ATP binding; the sequence is EASS. Residue S389 coordinates L-serine.

The protein belongs to the class-II aminoacyl-tRNA synthetase family. Type-1 seryl-tRNA synthetase subfamily. In terms of assembly, homodimer. The tRNA molecule binds across the dimer.

The protein resides in the cytoplasm. It carries out the reaction tRNA(Ser) + L-serine + ATP = L-seryl-tRNA(Ser) + AMP + diphosphate + H(+). The enzyme catalyses tRNA(Sec) + L-serine + ATP = L-seryl-tRNA(Sec) + AMP + diphosphate + H(+). It functions in the pathway aminoacyl-tRNA biosynthesis; selenocysteinyl-tRNA(Sec) biosynthesis; L-seryl-tRNA(Sec) from L-serine and tRNA(Sec): step 1/1. Catalyzes the attachment of serine to tRNA(Ser). Is also able to aminoacylate tRNA(Sec) with serine, to form the misacylated tRNA L-seryl-tRNA(Sec), which will be further converted into selenocysteinyl-tRNA(Sec). In Chloroherpeton thalassium (strain ATCC 35110 / GB-78), this protein is Serine--tRNA ligase.